The following is a 564-amino-acid chain: Arginine--tRNA ligase (564 aa).

A 'HIGH' region motif is present at residues 122–132 (PNIAKPFSIGH).

This sequence belongs to the class-I aminoacyl-tRNA synthetase family. Monomer.

It is found in the cytoplasm. The catalysed reaction is tRNA(Arg) + L-arginine + ATP = L-arginyl-tRNA(Arg) + AMP + diphosphate. In Lactococcus lactis subsp. cremoris (strain MG1363), this protein is Arginine--tRNA ligase.